Consider the following 1334-residue polypeptide: Lysine-specific demethylase 3A-B (1334 aa).

Disordered regions lie at residues 243-288 (DQND…KTSF), 352-382 (PGIQNAATPPPANSPPSFGAATPQGKGSQNL), and 514-533 (KPQEPPYTKSPNKTDGVTYP). Basic and acidic residues predominate over residues 267-283 (TEVKQTRNEEVPSKDVT). Residues 684-709 (CDACDTTIFNLHWVCPKCGFGVCVDC) form a C6-type zinc finger. The LXXLL motif motif lies at 897-901 (LRNLL). The JmjC domain maps to 1089 to 1294 (RREGKLNLAA…HCFCLTQEFR (206 aa)). Residues histidine 1133, aspartate 1135, and histidine 1262 each coordinate Fe cation.

This sequence belongs to the JHDM2 histone demethylase family. Fe(2+) serves as cofactor.

It is found in the cytoplasm. The protein resides in the nucleus. It catalyses the reaction N(6),N(6)-dimethyl-L-lysyl(9)-[histone H3] + 2 2-oxoglutarate + 2 O2 = L-lysyl(9)-[histone H3] + 2 formaldehyde + 2 succinate + 2 CO2. In terms of biological role, histone demethylase that specifically demethylates 'Lys-9' of histone H3, thereby playing a central role in histone code. Preferentially demethylates mono- and dimethylated H3 'Lys-9' residue, with a preference for dimethylated residue, while it has weak or no activity on trimethylated H3 'Lys-9'. Demethylation of Lys residue generates formaldehyde and succinate. The sequence is that of Lysine-specific demethylase 3A-B (kdm3a-b) from Xenopus laevis (African clawed frog).